We begin with the raw amino-acid sequence, 354 residues long: NADH-quinone oxidoreductase subunit H (354 aa).

The next 8 helical transmembrane spans lie at 25 to 45, 91 to 111, 126 to 146, 170 to 190, 205 to 225, 267 to 287, 290 to 310, and 330 to 350; these read LVRI…LILW, WIYM…WAVI, LLYA…AGWA, MGFA…SGIV, FLSW…ISGI, IVIS…PFGF, FIPG…VFIW, and IFIP…MSPL.

Belongs to the complex I subunit 1 family. As to quaternary structure, NDH-1 is composed of 14 different subunits. Subunits NuoA, H, J, K, L, M, N constitute the membrane sector of the complex.

The protein resides in the cell inner membrane. It catalyses the reaction a quinone + NADH + 5 H(+)(in) = a quinol + NAD(+) + 4 H(+)(out). Functionally, NDH-1 shuttles electrons from NADH, via FMN and iron-sulfur (Fe-S) centers, to quinones in the respiratory chain. The immediate electron acceptor for the enzyme in this species is believed to be ubiquinone. Couples the redox reaction to proton translocation (for every two electrons transferred, four hydrogen ions are translocated across the cytoplasmic membrane), and thus conserves the redox energy in a proton gradient. This subunit may bind ubiquinone. This Paraburkholderia xenovorans (strain LB400) protein is NADH-quinone oxidoreductase subunit H.